The sequence spans 896 residues: Probable sodium/sulfate cotransporter 3 (896 aa).

The next 5 helical transmembrane spans lie at 1–21, 47–69, 106–126, 140–160, and 186–206; these read MAAI…SFII, IITV…IFLY, VMVL…IPIL, LLIP…IGTS, and MFDI…FIIL. 4 consecutive RCK C-terminal domains span residues 212-296, 319-404, 408-493, and 499-586; these read LPGN…EFGL, TAFH…FKIN, LRFV…FPGL, and EQVD…KAFV. Transmembrane regions (helical) follow at residues 602 to 622, 626 to 646, 654 to 674, 685 to 705, 734 to 754, 776 to 796, and 804 to 824; these read MAIG…GGLK, YIHL…TGCM, AIMW…AALE, AIIS…AIYV, LKIP…AGFI, FATI…FILC, and VWIA…LLTL. Residues 857–881 are disordered; the sequence is RAQSFGGKAMSVGSTESRTDGSSTP. Residues 868–881 are compositionally biased toward polar residues; that stretch reads VGSTESRTDGSSTP.

The protein belongs to the divalent anion:Na+ symporter (DASS) superfamily. Na+/sulfate symporter (TC 2.A.47.4) family.

It is found in the cell membrane. Na(+)/sulfate cotransporter with a probable low-affinity for sulfate. The protein is Probable sodium/sulfate cotransporter 3 (SLT3) of Chlamydomonas reinhardtii (Chlamydomonas smithii).